A 118-amino-acid polypeptide reads, in one-letter code: Co-chaperonin GroES (118 aa).

It belongs to the GroES chaperonin family. Heptamer of 7 subunits arranged in a ring. Interacts with the chaperonin GroEL.

The protein resides in the cytoplasm. In terms of biological role, together with the chaperonin GroEL, plays an essential role in assisting protein folding. The GroEL-GroES system forms a nano-cage that allows encapsulation of the non-native substrate proteins and provides a physical environment optimized to promote and accelerate protein folding. GroES binds to the apical surface of the GroEL ring, thereby capping the opening of the GroEL channel. The chain is Co-chaperonin GroES from Helicobacter pylori (strain P12).